The following is a 441-amino-acid chain: uncharacterized protein (441 aa).

217 to 224 contributes to the ATP binding site; the sequence is GETGTGKT.

The protein belongs to the GSP E family.

This is an uncharacterized protein from Bacillus anthracis.